An 81-amino-acid chain; its full sequence is Photosystem I iron-sulfur center (81 aa).

4Fe-4S ferredoxin-type domains are found at residues 2–31 (SHKI…MIPW) and 39–68 (IASA…VRVY). 8 residues coordinate [4Fe-4S] cluster: Cys-11, Cys-14, Cys-17, Cys-21, Cys-48, Cys-51, Cys-54, and Cys-58.

As to quaternary structure, the eukaryotic PSI reaction center is composed of at least 11 subunits. The cofactor is [4Fe-4S] cluster.

The protein resides in the plastid. The protein localises to the chloroplast thylakoid membrane. The enzyme catalyses reduced [plastocyanin] + hnu + oxidized [2Fe-2S]-[ferredoxin] = oxidized [plastocyanin] + reduced [2Fe-2S]-[ferredoxin]. Functionally, apoprotein for the two 4Fe-4S centers FA and FB of photosystem I (PSI); essential for photochemical activity. FB is the terminal electron acceptor of PSI, donating electrons to ferredoxin. The C-terminus interacts with PsaA/B/D and helps assemble the protein into the PSI complex. Required for binding of PsaD and PsaE to PSI. PSI is a plastocyanin-ferredoxin oxidoreductase, converting photonic excitation into a charge separation, which transfers an electron from the donor P700 chlorophyll pair to the spectroscopically characterized acceptors A0, A1, FX, FA and FB in turn. The protein is Photosystem I iron-sulfur center of Chara vulgaris (Common stonewort).